Reading from the N-terminus, the 441-residue chain is Protein C-ets-1 (441 aa).

K8 and K15 each carry N6-acetyllysine; alternate. Glycyl lysine isopeptide (Lys-Gly) (interchain with G-Cter in SUMO2); alternate cross-links involve residues K8 and K15. A Phosphothreonine; by MAPK modification is found at T38. Positions 51–136 constitute a PNT domain; the sequence is ATFSGFTKEQ…EHLEILQKED (86 aa). The activation domain; required for transcription activation stretch occupies residues 130–243; the sequence is EILQKEDVKP…DNMCMGRTSR (114 aa). K138 participates in a covalent cross-link: Glycyl lysine isopeptide (Lys-Gly) (interchain with G-Cter in SUMO2). Position 223 is a phosphotyrosine (Y223). K227 is covalently cross-linked (Glycyl lysine isopeptide (Lys-Gly) (interchain with G-Cter in SUMO)). Phosphoserine occurs at positions 251 and 254. At T265 the chain carries Phosphothreonine. Phosphoserine occurs at positions 267, 270, 282, and 285. Residues 304-312 are helix HI-1; sequence FKDYVRDRA. At K305 the chain carries N6-acetyllysine. Residues 323 to 330 form a helix HI-2 region; the sequence is AAALAGYT. The ETS DNA-binding region spans 335-415; the sequence is IQLWQFLLEL…AGKRYVYRFV (81 aa). The helix H4 stretch occupies residues 418 to 422; sequence LQSLL. A helix H5 region spans residues 426-432; it reads PEELHAM.

This sequence belongs to the ETS family. As to quaternary structure, binds DNA as a homodimer; homodimerization is required for transcription activation. Interacts with MAF and MAFB. Interacts with PAX5; the interaction alters DNA-binding properties. Interacts with DAXX. Interacts with UBE2I. Interacts with SP100; the interaction is direct and modulates ETS1 transcriptional activity. In terms of processing, sumoylated on Lys-15 and Lys-227, preferentially with SUMO2; which inhibits transcriptional activity. Ubiquitinated; which induces proteasomal degradation. Post-translationally, phosphorylation at Ser-251, Ser-282 and Ser-285 by CaMK2/CaMKII in response to calcium signaling decreases affinity for DNA: an increasing number of phosphoserines causes DNA-binding to become progressively weaker. As to expression, highly expressed within lymphoid cells. Isoforms c-ETS-1A and Ets-1 p27 are both detected in all fetal tissues tested, but vary with tissue type in adult tissues. None is detected in brain or kidney.

The protein resides in the nucleus. Its subcellular location is the cytoplasm. Autoinhibited by a module composed of four alpha helices (HI-1, HI-2, H4, and H5) that flank the DNA-binding ETS domain, reducing the affinity for DNA. Phosphorylation by CaMK2/CaMKII in response to calcium signaling decreases affinity for DNA. Functionally, transcription factor. Directly controls the expression of cytokine and chemokine genes in a wide variety of different cellular contexts. May control the differentiation, survival and proliferation of lymphoid cells. May also regulate angiogenesis through regulation of expression of genes controlling endothelial cell migration and invasion. In terms of biological role, acts as a dominant-negative for isoform c-ETS-1A. The polypeptide is Protein C-ets-1 (ETS1) (Homo sapiens (Human)).